A 424-amino-acid chain; its full sequence is Mitogen-activated protein kinase mpkA (424 aa).

Positions 23-314 (YNVTKELGQG…VEEALEHPYL (292 aa)) constitute a Protein kinase domain. Residues 29-37 (LGQGAYGIV) and Lys52 each bind ATP. Positions 375 to 424 (QQIAQQTNVPIPDHQQGGWKQEEPKPQEVHAAGGHVNDLESSLQRGMDVQ) are disordered.

It belongs to the protein kinase superfamily. Ser/Thr protein kinase family. In terms of assembly, interacts with flbB, flbC, brlA, and rasB. Interacts with fmqA and fmqC. Interacts with hsp90. Mg(2+) is required as a cofactor. In terms of processing, phosphorylated by the upstreamm MAPKK mkk2. Phosphorylation is induced during asexual development. Phosphorylation is regulated by rlmA.

It carries out the reaction L-seryl-[protein] + ATP = O-phospho-L-seryl-[protein] + ADP + H(+). The catalysed reaction is L-threonyl-[protein] + ATP = O-phospho-L-threonyl-[protein] + ADP + H(+). Its activity is regulated as follows. Activated by threonine and tyrosine phosphorylation by the upstreamm MAPKK mkk2. Functionally, mitogen-activated protein kinase; part of cell wall integrity (CWI) signaling pathway composed of pkcA, the bck1-mkk2-mpka MAPK cascade and the downstream rlmA transcription regulator. The CWI signaling pathway regulates cell wall integrity and pyomelanin formation. CWI also controls oxidative stress response, gliotoxin production, iron adaptation and asexual development. Finally, CWI is constitutively required for A.fumigatus to cope with the temperature increase found in the mammalian lung environment, during infection. MpkA positively modulates the expression of fumiquinazoline cluster during conidiogenesis and directly phosphorylates fmqC, and perhaps also fmqA. The polypeptide is Mitogen-activated protein kinase mpkA (Aspergillus fumigatus (strain ATCC MYA-4609 / CBS 101355 / FGSC A1100 / Af293) (Neosartorya fumigata)).